The chain runs to 136 residues: Urease subunit beta (136 aa).

The interval 112–136 is disordered; it reads ENDEYAGVFGDNGTENVNKKGGKRS.

The protein belongs to the urease beta subunit family. In terms of assembly, heterotrimer of UreA (gamma), UreB (beta) and UreC (alpha) subunits. Three heterotrimers associate to form the active enzyme.

It localises to the cytoplasm. The catalysed reaction is urea + 2 H2O + H(+) = hydrogencarbonate + 2 NH4(+). Its pathway is nitrogen metabolism; urea degradation; CO(2) and NH(3) from urea (urease route): step 1/1. This is Urease subunit beta from Staphylococcus aureus (strain MRSA252).